A 161-amino-acid chain; its full sequence is Putative pre-16S rRNA nuclease (161 aa).

The segment at 142-161 (AGSPPGALVPRNRVDPDRHA) is disordered.

It belongs to the YqgF nuclease family.

It localises to the cytoplasm. Functionally, could be a nuclease involved in processing of the 5'-end of pre-16S rRNA. The protein is Putative pre-16S rRNA nuclease of Clavibacter sepedonicus (Clavibacter michiganensis subsp. sepedonicus).